The sequence spans 689 residues: MNRARLQLASLWLLLTVTLQAVASAMGTTEREMDVKALIRVTPLQAEESGGVGQGNLTLEGLFARVAEISPAEGRLLQFHPLSLCNTSEDDQTKPGFISIVKLETPDRDTQPCLSLANKARLAGERGAHAVLFDITNDRGALQQLQQPAGINQPVVLIWGPDAEKLMDVVNKNKEALVKIEVQEQPKWLHHDIWILLTVAGTVMFFVLYAVARLLCRQPPPQDSIQQQTLLAISRLGTRRYQQRMLKDQRASGGWVETASTSSSVPVCAICLEEFTDGQELRILPCCHEYHLGCVDPWLRQNHTCPLCMYDILDSGTPPRPLAHRAPSQTQLWGRYPGSARLMSHLPPHGTPMVFPTPNNSLFLPRAPYYLDHTHHWQMPEQMAMQMRTHRRGAEGTRELGISPGCQDSSGYLPDDPGSDSSSGPCHGSSSENCTDISLHCLHGTSSSSVHSSQSNQEDSSPPALASYLLPQGELPALNPLLSTQASYASHVHFHQHRHHHYRRNQPSMSHSHPHRSKRRTKVSRADPSYYREHRHTTGANGELRSLMVRREPRPSCSRTCFDPRTNREHPRHQQSMPQAASVVQGSSEPDVATSLRGSRTDPPSRTYRKKKSSAPSHLPLLYSPRHCHPANSVQMSESSHPRWAEEVRLLHSRVNSHRENTAMMHLYHPPHHNQGATEEIEAVCEHAV.

The signal sequence occupies residues 1-27 (MNRARLQLASLWLLLTVTLQAVASAMG). Over 28-191 (TTEREMDVKA…VQEQPKWLHH (164 aa)) the chain is Extracellular. N56 and N86 each carry an N-linked (GlcNAc...) asparagine glycan. C85 and C113 are joined by a disulfide. Residues 192–212 (DIWILLTVAGTVMFFVLYAVA) traverse the membrane as a helical segment. At 213-689 (RLLCRQPPPQ…EIEAVCEHAV (477 aa)) the chain is on the cytoplasmic side. The RING-type; atypical zinc-finger motif lies at 268–308 (CAICLEEFTDGQELRILPCCHEYHLGCVDPWLRQNHTCPLC). Disordered stretches follow at residues 386–430 (QMRT…HGSS), 445–467 (TSSS…ALAS), and 492–639 (VHFH…MSES). 2 stretches are compositionally biased toward low complexity: residues 408–430 (DSSG…HGSS) and 446–461 (SSSS…EDSS). Composition is skewed to basic residues over residues 492 to 504 (VHFH…HYRR) and 512 to 523 (SHPHRSKRRTKV). Residues 574-588 (QQSMPQAASVVQGSS) show a composition bias toward polar residues.

This sequence belongs to the ZNRF3 family.

Its subcellular location is the cell membrane. It is found in the endoplasmic reticulum membrane. The protein resides in the nucleus envelope. The enzyme catalyses S-ubiquitinyl-[E2 ubiquitin-conjugating enzyme]-L-cysteine + [acceptor protein]-L-lysine = [E2 ubiquitin-conjugating enzyme]-L-cysteine + N(6)-ubiquitinyl-[acceptor protein]-L-lysine.. It functions in the pathway protein modification; protein ubiquitination. Functionally, E3 ubiquitin-protein ligase that acts as a negative regulator of the Wnt signaling pathway by mediating the ubiquitination, endocytosis and subsequent degradation of Wnt receptor complex components Frizzled. Acts on both canonical and non-canonical Wnt signaling pathway. Along with RSPO2 and ZNRF3, constitutes a master switch that governs limb specification. The sequence is that of E3 ubiquitin-protein ligase RNF43 (rnf43) from Xenopus tropicalis (Western clawed frog).